We begin with the raw amino-acid sequence, 542 residues long: Putative cysteine ligase BshC (542 aa).

The stretch at 458-479 (LTKNATLLQAQIDFLHQTLQRA) forms a coiled coil.

This sequence belongs to the BshC family.

Functionally, involved in bacillithiol (BSH) biosynthesis. May catalyze the last step of the pathway, the addition of cysteine to glucosamine malate (GlcN-Mal) to generate BSH. This chain is Putative cysteine ligase BshC, found in Geobacillus sp. (strain WCH70).